We begin with the raw amino-acid sequence, 415 residues long: Multidrug resistance protein MdtA (415 aa).

Positions 1-21 (MKGSYKSRWVIVIVVVIAAIA) are cleaved as a signal peptide. 2 disordered regions span residues 32–60 (SRSA…GPLA) and 392–415 (EAQS…GARS). Positions 399–415 (PEEKATSREYAKKGARS) are enriched in basic and acidic residues.

This sequence belongs to the membrane fusion protein (MFP) (TC 8.A.1) family. In terms of assembly, part of a tripartite efflux system composed of MdtA, MdtB and MdtC.

Its subcellular location is the cell inner membrane. Functionally, the MdtABC tripartite complex confers resistance against novobiocin and deoxycholate. This Escherichia coli O81 (strain ED1a) protein is Multidrug resistance protein MdtA.